The sequence spans 265 residues: Probable ribose-5-phosphate isomerase 2 (265 aa).

A2 carries the N-acetylalanine modification. At S96 the chain carries Phosphoserine.

The protein belongs to the ribose 5-phosphate isomerase family.

It is found in the cytoplasm. The enzyme catalyses aldehydo-D-ribose 5-phosphate = D-ribulose 5-phosphate. It participates in carbohydrate degradation; pentose phosphate pathway; D-ribose 5-phosphate from D-ribulose 5-phosphate (non-oxidative stage): step 1/1. Its function is as follows. Catalyzes the reversible conversion of ribose-5-phosphate to ribulose 5-phosphate. The chain is Probable ribose-5-phosphate isomerase 2 (RPI2) from Arabidopsis thaliana (Mouse-ear cress).